Consider the following 40-residue polypeptide: Auxin-responsive endogenous peptide 1 (40 aa).

Residues L7 to H29 form a helical membrane-spanning segment.

In terms of tissue distribution, expressed in cotyledons, hypocotyls, roots, newly developing leaves and shoot apical meristem. Not detected in flowers, siliques or mature leaves.

The protein resides in the cytoplasm. It localises to the nucleus. It is found in the membrane. Its function is as follows. Negative regulator of the auxin response. In Arabidopsis thaliana (Mouse-ear cress), this protein is Auxin-responsive endogenous peptide 1.